The chain runs to 243 residues: Aldehyde decarbonylase (243 aa).

Fe cation contacts are provided by glutamate 45, glutamate 73, histidine 76, glutamate 128, and histidine 160.

Belongs to the aldehyde decarbonylase family. Requires Binds 2 metal cations per subunit. The catalytic dinuclear metal-binding site could be either a di-iron or a manganese-iron cofactor. as cofactor.

The enzyme catalyses a long-chain fatty aldehyde + 2 NADPH + O2 + H(+) = a long-chain alkane + formate + 2 NADP(+) + H2O. Catalyzes the decarbonylation of fatty aldehydes to alkanes. Requires the presence of ferredoxin, ferredoxin reductase and NADPH for in vitro decarbonylase activity. Involved in the biosynthesis of alkanes, mainly heptadecane and pentadecane. This chain is Aldehyde decarbonylase, found in Prochlorococcus marinus (strain MIT 9313).